A 656-amino-acid chain; its full sequence is Threonine--tRNA ligase (656 aa).

Residues 1–63 (MAEIQLTFPD…LEDGAIEIIT (63 aa)) form the TGS domain. The catalytic stretch occupies residues 243 to 541 (DHRVIGNQLD…LTEIYKGAFP (299 aa)). Cys-337, His-388, and His-518 together coordinate Zn(2+).

This sequence belongs to the class-II aminoacyl-tRNA synthetase family. As to quaternary structure, homodimer. Zn(2+) is required as a cofactor.

It is found in the cytoplasm. It carries out the reaction tRNA(Thr) + L-threonine + ATP = L-threonyl-tRNA(Thr) + AMP + diphosphate + H(+). Functionally, catalyzes the attachment of threonine to tRNA(Thr) in a two-step reaction: L-threonine is first activated by ATP to form Thr-AMP and then transferred to the acceptor end of tRNA(Thr). Also edits incorrectly charged L-seryl-tRNA(Thr). The chain is Threonine--tRNA ligase from Latilactobacillus sakei subsp. sakei (strain 23K) (Lactobacillus sakei subsp. sakei).